The following is a 116-amino-acid chain: RutC family protein HI_1627 (116 aa).

This sequence belongs to the RutC family.

The chain is RutC family protein HI_1627 from Haemophilus influenzae (strain ATCC 51907 / DSM 11121 / KW20 / Rd).